Consider the following 569-residue polypeptide: Dihydroxy-acid dehydratase (569 aa).

Cysteine 61 provides a ligand contact to [2Fe-2S] cluster. Aspartate 93 is a binding site for Mg(2+). Cysteine 134 provides a ligand contact to [2Fe-2S] cluster. Residues aspartate 135 and lysine 136 each contribute to the Mg(2+) site. Lysine 136 bears the N6-carboxylysine mark. Residue cysteine 211 participates in [2Fe-2S] cluster binding. Residue glutamate 462 participates in Mg(2+) binding. Serine 488 functions as the Proton acceptor in the catalytic mechanism.

This sequence belongs to the IlvD/Edd family. In terms of assembly, homodimer. Requires [2Fe-2S] cluster as cofactor. The cofactor is Mg(2+).

The enzyme catalyses (2R)-2,3-dihydroxy-3-methylbutanoate = 3-methyl-2-oxobutanoate + H2O. It carries out the reaction (2R,3R)-2,3-dihydroxy-3-methylpentanoate = (S)-3-methyl-2-oxopentanoate + H2O. The protein operates within amino-acid biosynthesis; L-isoleucine biosynthesis; L-isoleucine from 2-oxobutanoate: step 3/4. Its pathway is amino-acid biosynthesis; L-valine biosynthesis; L-valine from pyruvate: step 3/4. Functionally, functions in the biosynthesis of branched-chain amino acids. Catalyzes the dehydration of (2R,3R)-2,3-dihydroxy-3-methylpentanoate (2,3-dihydroxy-3-methylvalerate) into 2-oxo-3-methylpentanoate (2-oxo-3-methylvalerate) and of (2R)-2,3-dihydroxy-3-methylbutanoate (2,3-dihydroxyisovalerate) into 2-oxo-3-methylbutanoate (2-oxoisovalerate), the penultimate precursor to L-isoleucine and L-valine, respectively. This Tropheryma whipplei (strain Twist) (Whipple's bacillus) protein is Dihydroxy-acid dehydratase.